A 160-amino-acid polypeptide reads, in one-letter code: Eukaryotic translation initiation factor 5A (160 aa).

The span at 1–10 (MSDDDHHFES) shows a compositional bias: basic and acidic residues. The disordered stretch occupies residues 1–23 (MSDDDHHFESSADAGASKTYPQQ). A Hypusine modification is found at K52.

It belongs to the eIF-5A family. Post-translationally, lys-52 undergoes hypusination, a unique post-translational modification that consists in the addition of a butylamino group from spermidine to lysine side chain, leading to the formation of the unusual amino acid hypusine. eIF-5As are the only known proteins to undergo this modification, which is essential for their function.

In terms of biological role, translation factor that promotes translation elongation and termination, particularly upon ribosome stalling at specific amino acid sequence contexts. Binds between the exit (E) and peptidyl (P) site of the ribosome and promotes rescue of stalled ribosome: specifically required for efficient translation of polyproline-containing peptides as well as other motifs that stall the ribosome. Acts as a ribosome quality control (RQC) cofactor by joining the RQC complex to facilitate peptidyl transfer during CAT tailing step. This chain is Eukaryotic translation initiation factor 5A, found in Dianthus caryophyllus (Carnation).